A 123-amino-acid chain; its full sequence is Large ribosomal subunit protein uL14 (123 aa).

It belongs to the universal ribosomal protein uL14 family. In terms of assembly, part of the 50S ribosomal subunit. Forms a cluster with proteins L3 and L19. In the 70S ribosome, L14 and L19 interact and together make contacts with the 16S rRNA in bridges B5 and B8.

In terms of biological role, binds to 23S rRNA. Forms part of two intersubunit bridges in the 70S ribosome. The protein is Large ribosomal subunit protein uL14 of Enterobacter sp. (strain 638).